Reading from the N-terminus, the 230-residue chain is Ion-translocating oxidoreductase complex subunit E (230 aa).

The Cytoplasmic segment spans residues Met1–Pro17. 2 helical membrane-spanning segments follow: residues Ala18–Ala38 and Leu39–Val59. Over Arg60–Arg68 the chain is Cytoplasmic. The chain crosses the membrane as a helical span at residues Ile69–Ala89. At Tyr90–Tyr92 the chain is on the periplasmic side. A helical transmembrane segment spans residues Gly93 to Gly113. Residues Arg114–Asp123 are Cytoplasmic-facing. The chain crosses the membrane as a helical span at residues Val124–Val144. Residues Leu145–Ser181 are Periplasmic-facing. The helical transmembrane segment at Ala182–Ala202 threads the bilayer. Residues Lys203–Val230 lie on the Cytoplasmic side of the membrane.

Belongs to the NqrDE/RnfAE family. The complex is composed of six subunits: RnfA, RnfB, RnfC, RnfD, RnfE and RnfG.

The protein localises to the cell inner membrane. Functionally, part of a membrane-bound complex that couples electron transfer with translocation of ions across the membrane. This is Ion-translocating oxidoreductase complex subunit E from Vibrio cholerae serotype O1 (strain ATCC 39541 / Classical Ogawa 395 / O395).